A 72-amino-acid chain; its full sequence is Translation initiation factor IF-1 1 (72 aa).

The S1-like domain occupies 1 to 72 (MAKEDRIEMQ…SRARIIFRAK (72 aa)).

This sequence belongs to the IF-1 family. Component of the 30S ribosomal translation pre-initiation complex which assembles on the 30S ribosome in the order IF-2 and IF-3, IF-1 and N-formylmethionyl-tRNA(fMet); mRNA recruitment can occur at any time during PIC assembly.

Its subcellular location is the cytoplasm. In terms of biological role, one of the essential components for the initiation of protein synthesis. Stabilizes the binding of IF-2 and IF-3 on the 30S subunit to which N-formylmethionyl-tRNA(fMet) subsequently binds. Helps modulate mRNA selection, yielding the 30S pre-initiation complex (PIC). Upon addition of the 50S ribosomal subunit IF-1, IF-2 and IF-3 are released leaving the mature 70S translation initiation complex. This is Translation initiation factor IF-1 1 from Methylobacillus flagellatus (strain ATCC 51484 / DSM 6875 / VKM B-1610 / KT).